A 237-amino-acid chain; its full sequence is Large ribosomal subunit protein bL25 (237 aa).

The tract at residues 1-104 (MELTAKPRTP…SVPVHTTGRS (104 aa)) is N-terminal domain. Positions 105–189 (QGEVQGGLVD…ELEAEVQAAQ (85 aa)) are middle domain. Residues 190-237 (VAGLVAAGELSEEAAEAVLEGDASLEEVKAEASEDNAGTDSEDNSDAQ) form a C-terminal domain region. The tract at residues 205–237 (EAVLEGDASLEEVKAEASEDNAGTDSEDNSDAQ) is disordered.

Belongs to the bacterial ribosomal protein bL25 family. CTC subfamily. Part of the 50S ribosomal subunit. Contacts proteins L11 and L16, the A site tRNA, and the 5S and 23S rRNAs.

This is one of 3 proteins that mediate the attachment of the 5S rRNA onto the large ribosomal subunit. This protein has three domains. The N-terminal one is bound on the solvent face, the middle domain fills the space between the 5S rRNA and the L11 arm contacting the 23S rRNA while the C-terminal domain is on the edge of the intersubunit interface and contacts the A site. The protein conformation changes upon binding of a tRNA mimic to the A site, although the mimic does not interact directly with CTC itself, consistent with CTCs presumed role in moderating A site binding. In Deinococcus radiodurans (strain ATCC 13939 / DSM 20539 / JCM 16871 / CCUG 27074 / LMG 4051 / NBRC 15346 / NCIMB 9279 / VKM B-1422 / R1), this protein is Large ribosomal subunit protein bL25 (rplY).